The chain runs to 513 residues: Leucine-rich repeat-containing protein 24 (513 aa).

The N-terminal stretch at 1–20 is a signal peptide; the sequence is MALRAPALLPLLLLLLPLRA. The LRRNT domain maps to 21–50; it reads AGCPAACRCYSATVECGALRLRVVPLGIPP. LRR repeat units lie at residues 51–72, 75–96, 99–120, 123–144, 147–168, and 171–192; these read GTQT…ALAP, ALRR…AFRA, RLLE…AFVG, QLRV…TFLH, RLQE…ALAG, and SLAL…ALQP. The 56-residue stretch at 204–259 folds into the LRRCT domain; it reads NPWRCDCALHWLGAWIKEGGQRLLTSRDRKIMCAEPPRLALQSLLDVSHSSLICIP. The Ig-like C2-type domain maps to 260–361; sequence PSVHVQPLEL…GAARVPFRLL (102 aa). A disulfide bridge connects residues C281 and C345. N-linked (GlcNAc...) asparagine glycosylation is found at N334 and N363. The segment at 365–391 is disordered; sequence SRQQPQQPAQPPPPAARPAGSEPRPEA. A helical membrane pass occupies residues 406–426; sequence AIAAAIALLALTALLLVAMIC.

Its subcellular location is the membrane. The protein is Leucine-rich repeat-containing protein 24 (LRRC24) of Homo sapiens (Human).